We begin with the raw amino-acid sequence, 83 residues long: Cytochrome b559 subunit alpha (83 aa).

A helical transmembrane segment spans residues 21-35; sequence VIHSITIPSLFIAGW. Residue His-23 participates in heme binding.

Belongs to the PsbE/PsbF family. In terms of assembly, heterodimer of an alpha subunit and a beta subunit. PSII is composed of 1 copy each of membrane proteins PsbA, PsbB, PsbC, PsbD, PsbE, PsbF, PsbH, PsbI, PsbJ, PsbK, PsbL, PsbM, PsbT, PsbX, PsbY, PsbZ, Psb30/Ycf12, at least 3 peripheral proteins of the oxygen-evolving complex and a large number of cofactors. It forms dimeric complexes. It depends on heme b as a cofactor.

The protein localises to the plastid. The protein resides in the chloroplast thylakoid membrane. Its function is as follows. This b-type cytochrome is tightly associated with the reaction center of photosystem II (PSII). PSII is a light-driven water:plastoquinone oxidoreductase that uses light energy to abstract electrons from H(2)O, generating O(2) and a proton gradient subsequently used for ATP formation. It consists of a core antenna complex that captures photons, and an electron transfer chain that converts photonic excitation into a charge separation. The chain is Cytochrome b559 subunit alpha from Zygnema circumcarinatum (Green alga).